The following is a 90-amino-acid chain: DNA-directed RNA polymerase subunit omega (90 aa).

This sequence belongs to the RNA polymerase subunit omega family. In terms of assembly, the RNAP catalytic core consists of 2 alpha, 1 beta, 1 beta' and 1 omega subunit. When a sigma factor is associated with the core the holoenzyme is formed, which can initiate transcription.

It carries out the reaction RNA(n) + a ribonucleoside 5'-triphosphate = RNA(n+1) + diphosphate. Its function is as follows. Promotes RNA polymerase assembly. Latches the N- and C-terminal regions of the beta' subunit thereby facilitating its interaction with the beta and alpha subunits. The sequence is that of DNA-directed RNA polymerase subunit omega from Rhodopirellula baltica (strain DSM 10527 / NCIMB 13988 / SH1).